Here is a 662-residue protein sequence, read N- to C-terminus: Bifunctional polymyxin resistance protein ArnA (662 aa).

The tract at residues 1–307 is formyltransferase ArnAFT; that stretch reads MTSKAVVFAY…ELGLVEGARL (307 aa). The Proton donor; for formyltransferase activity role is filled by His106. (6R)-10-formyltetrahydrofolate is bound by residues Arg116 and 138-142; that span reads VERAD. The interval 316–662 is dehydrogenase ArnADH; sequence RRTRVLILGV…EALREREAQA (347 aa). NAD(+)-binding positions include Asp349 and 370–371; that span reads DI. Residues Ala395, Tyr400, and 434-435 each bind UDP-alpha-D-glucuronate; that span reads TS. Glu436 (proton acceptor; for decarboxylase activity) is an active-site residue. Residues Arg462, Asn493, 527 to 536, and Tyr614 contribute to the UDP-alpha-D-glucuronate site; that span reads RLVDGGAQKR. Arg620 acts as the Proton donor; for decarboxylase activity in catalysis.

It in the N-terminal section; belongs to the Fmt family. UDP-L-Ara4N formyltransferase subfamily. This sequence in the C-terminal section; belongs to the NAD(P)-dependent epimerase/dehydratase family. UDP-glucuronic acid decarboxylase subfamily. As to quaternary structure, homohexamer, formed by a dimer of trimers.

The catalysed reaction is UDP-alpha-D-glucuronate + NAD(+) = UDP-beta-L-threo-pentopyranos-4-ulose + CO2 + NADH. It carries out the reaction UDP-4-amino-4-deoxy-beta-L-arabinose + (6R)-10-formyltetrahydrofolate = UDP-4-deoxy-4-formamido-beta-L-arabinose + (6S)-5,6,7,8-tetrahydrofolate + H(+). It participates in nucleotide-sugar biosynthesis; UDP-4-deoxy-4-formamido-beta-L-arabinose biosynthesis; UDP-4-deoxy-4-formamido-beta-L-arabinose from UDP-alpha-D-glucuronate: step 1/3. It functions in the pathway nucleotide-sugar biosynthesis; UDP-4-deoxy-4-formamido-beta-L-arabinose biosynthesis; UDP-4-deoxy-4-formamido-beta-L-arabinose from UDP-alpha-D-glucuronate: step 3/3. The protein operates within bacterial outer membrane biogenesis; lipopolysaccharide biosynthesis. Bifunctional enzyme that catalyzes the oxidative decarboxylation of UDP-glucuronic acid (UDP-GlcUA) to UDP-4-keto-arabinose (UDP-Ara4O) and the addition of a formyl group to UDP-4-amino-4-deoxy-L-arabinose (UDP-L-Ara4N) to form UDP-L-4-formamido-arabinose (UDP-L-Ara4FN). The modified arabinose is attached to lipid A and is required for resistance to polymyxin and cationic antimicrobial peptides. The protein is Bifunctional polymyxin resistance protein ArnA of Pseudomonas paraeruginosa (strain DSM 24068 / PA7) (Pseudomonas aeruginosa (strain PA7)).